We begin with the raw amino-acid sequence, 343 residues long: MERYEIVKDIGSGNFGVAKLVRDKFSKELFAVKFIERGQKIDEHVQREIMNHRSLIHPNIIRFKEVLLTATHLALVMEYAAGGELFGRICSAGRFSEDEARFFFQQLISGVNYCHSLQICHRDLKLENTLLDGSEAPRVKICDFGYSKSGVLHSQPKTTVGTPAYIAPEVLSTKEYDGKIADVWSCGVTLYVMLVGAYPFEDPSDPKDFRKTIGRILKAQYAIPDYVRVSDECRHLLSRIFVANPEKRITIEEIKNHSWFLKNLPVEMYEGSLMMNGPSTQTVEEIVWIIEEARKPITVATGLAGAGGSGGSSNGAIGSSSMDLDDLDTDFDDIDTADLLSPL.

A Protein kinase domain is found at 4-260; it reads YEIVKDIGSG…IEEIKNHSWF (257 aa). Residues 10 to 18 and K33 each bind ATP; that span reads IGSGNFGVA. D123 (proton acceptor) is an active-site residue. Position 158 is a phosphothreonine (T158).

This sequence belongs to the protein kinase superfamily. Ser/Thr protein kinase family. As to quaternary structure, interacts with I-2 and TOPP1. As to expression, expressed in seedlings.

It carries out the reaction L-seryl-[protein] + ATP = O-phospho-L-seryl-[protein] + ADP + H(+). The enzyme catalyses L-threonyl-[protein] + ATP = O-phospho-L-threonyl-[protein] + ADP + H(+). Its function is as follows. Involved in gene regulation and confers tolerance to drought and osmotic stress. This is Serine/threonine-protein kinase SRK2C (SRK2C) from Arabidopsis thaliana (Mouse-ear cress).